The primary structure comprises 372 residues: Chemerin-like receptor 1 (372 aa).

Residues 1–39 lie on the Extracellular side of the membrane; sequence MEYEGYNDSSIYGEEYSDGSDYIVDLEEAGPLEAKVAEV. A glycan (N-linked (GlcNAc...) asparagine) is linked at asparagine 7. Residues 40-62 form a helical membrane-spanning segment; that stretch reads FLVVIYSLVCFLGILGNGLVIVI. The Cytoplasmic portion of the chain corresponds to 63–73; sequence ATFKMKKTVNT. A helical membrane pass occupies residues 74–95; sequence VWFVNLAVADFLFNIFLPIHIT. The Extracellular segment spans residues 96 to 112; that stretch reads YAAMDYHWVFGKAMCKI. An intrachain disulfide couples cysteine 110 to cysteine 188. Residues 113–133 traverse the membrane as a helical segment; the sequence is SSFLLSHNMYTSVFLLTVISF. The Cytoplasmic segment spans residues 134–152; sequence DRCISVLLPVWSQNHRSVR. Residues 153-174 traverse the membrane as a helical segment; sequence LAYMTCVVVWVLAFFLSSPSLV. At 175–223 the chain is on the extracellular side; sequence FRDTVSTSHGKITCFNNFSLAAPEPFSHSTHPRTDPVGYSRHVAVTVTR. The N-linked (GlcNAc...) asparagine glycan is linked to asparagine 191. A helical membrane pass occupies residues 224–244; it reads FLCGFLIPVFIITACYLTIVF. Topologically, residues 245-260 are cytoplasmic; that stretch reads KLQRNRLAKTKKPFKI. The chain crosses the membrane as a helical span at residues 261–281; it reads IITIIITFFLCWCPYHTLYLL. Residues 282 to 299 lie on the Extracellular side of the membrane; sequence ELHHTAVPASVFSLGLPL. A helical transmembrane segment spans residues 300 to 319; sequence ATAVAIANSCMNPILYVFMG. At 320–372 the chain is on the cytoplasmic side; the sequence is HDFKKFKVALFSRLVNALSEDTGPSSYPSHRSFTKMSSLIEKASVNEKETSTL. The residue at position 338 (serine 338) is a Phosphoserine. Threonine 341 carries the phosphothreonine modification. Serine 348, serine 351, and serine 357 each carry phosphoserine. Threonine 371 bears the Phosphothreonine mark.

The protein belongs to the chemokine-like receptor (CMKLR) family. In terms of tissue distribution, high expression in heart and lung, low in small intestines, colon, kidney, liver, uterus and brain.

The protein localises to the cell membrane. Functionally, receptor for the chemoattractant adipokine chemerin/RARRES2 and for the omega-3 fatty acid derived molecule resolvin E1. Interaction with RARRES2 initiates activation of G proteins G(i)/G(o) and beta-arrestin pathways inducing cellular responses via second messenger pathways such as intracellular calcium mobilization, phosphorylation of MAP kinases MAPK1/MAPK3 (ERK1/2), TYRO3, MAPK14/P38MAPK and PI3K leading to multifunctional effects, like, reduction of immune responses, enhancing of adipogenesis and angionesis. Resolvin E1 down-regulates cytokine production in macrophages by reducing the activation of MAPK1/3 (ERK1/2) and NF-kappa-B. Positively regulates adipogenesis and adipocyte metabolism. This chain is Chemerin-like receptor 1 (Cmklr1), found in Rattus norvegicus (Rat).